The chain runs to 138 residues: Putative pre-16S rRNA nuclease (138 aa).

This sequence belongs to the YqgF nuclease family.

It localises to the cytoplasm. Its function is as follows. Could be a nuclease involved in processing of the 5'-end of pre-16S rRNA. The protein is Putative pre-16S rRNA nuclease of Salmonella arizonae (strain ATCC BAA-731 / CDC346-86 / RSK2980).